We begin with the raw amino-acid sequence, 550 residues long: Transcription factor p65 (550 aa).

The residue at position 1 (methionine 1) is an N-acetylmethionine. In terms of domain architecture, RHD spans 16-190; sequence ASGPYVEIIE…HPIFDNRAPN (175 aa). Lysine 37 is covalently cross-linked (Glycyl lysine isopeptide (Lys-Gly) (interchain with G-Cter in SUMO3)). Position 38 is a cysteine persulfide; alternate (cysteine 38). Cysteine 38 carries the S-nitrosocysteine; alternate modification. Residues lysine 122, lysine 123, lysine 218, and lysine 221 each carry the N6-acetyllysine modification. Glycyl lysine isopeptide (Lys-Gly) (interchain with G-Cter in SUMO3); alternate cross-links involve residues lysine 122 and lysine 123. Threonine 254 carries the post-translational modification Phosphothreonine. Phosphoserine occurs at positions 276 and 281. The short motif at 301 to 304 is the Nuclear localization signal element; it reads KRKR. At lysine 310 the chain carries N6-acetyllysine; alternate. At lysine 310 the chain carries N6-methyllysine. Serine 311 is subject to Phosphoserine. Transcriptional activation domain stretches follow at residues 342–388 and 414–476; these read PKPA…APVL and PGPP…EFQQ. Threonine 434 is modified (phosphothreonine). Serine 468 carries the phosphoserine modification. Threonine 505 is subject to Phosphothreonine. The transcriptional activation domain 2 stretch occupies residues 520–550; it reads TSGLPNGLSGDEDFSSIADMDFSALLSQISS. At serine 535 the chain carries Phosphoserine. Positions 535-543 match the 9aaTAD motif; sequence SIADMDFSA.

In terms of assembly, component of the NF-kappa-B p65-p50 complex. Component of the NF-kappa-B p65-c-Rel complex. Homodimer; component of the NF-kappa-B p65-p65 complex. Component of the NF-kappa-B p65-p52 complex. May interact with ETHE1. Binds TLE5 and TLE1. Interacts with TP53BP2. Binds to and is phosphorylated by the activated form of either RPS6KA4 or RPS6KA5. Interacts with ING4 and this interaction may be indirect. Interacts with CARM1, USP48 and UNC5CL. Interacts with IRAK1BP1. Interacts with NFKBID. Interacts with NFKBIA. Interacts with GSK3B. Interacts with NFKBIB. Interacts with NFKBIE. Interacts with NFKBIZ. Interacts with EHMT1 (via ANK repeats). Part of a 70-90 kDa complex at least consisting of CHUK, IKBKB, NFKBIA, RELA, ELP1 and MAP3K14. Interacts with HDAC3; HDAC3 mediates the deacetylation of RELA. Interacts with HDAC1; the interaction requires non-phosphorylated RELA. Interacts with CBP; the interaction requires phosphorylated RELA. Interacts (phosphorylated at 'Thr-254') with PIN1; the interaction inhibits p65 binding to NFKBIA. Interacts with SOCS1. Interacts with UXT. Interacts with MTDH and PHF11. Interacts with ARRB2. Interacts with NFKBIA (when phosphorylated), the interaction is direct; phosphorylated NFKBIA is part of a SCF(BTRC)-like complex lacking CUL1. Interacts with RNF25. Interacts (via C-terminus) with DDX1. Interacts with UFL1 and COMMD1. Interacts with BRMS1; this promotes deacetylation of 'Lys-310'. Interacts with NOTCH2. Directly interacts with MEN1; this interaction represses NFKB-mediated transactivation. Interacts with AKIP1, which promotes the phosphorylation and nuclear retention of RELA. Interacts (via the RHD) with GFI1; the interaction, after bacterial lipopolysaccharide (LPS) stimulation, inhibits the transcriptional activity by interfering with the DNA-binding activity to target gene promoter DNA. Interacts (when acetylated at Lys-310) with BRD4; leading to activation of the NF-kappa-B pathway. Interacts with MEFV. Interacts with CLOCK. Interacts (via N-terminus) with CPEN1; this interaction induces proteolytic cleavage of p65/RELA subunit and inhibition of NF-kappa-B transcriptional activity. Interacts with FOXP3. Interacts with CDK5RAP3; stimulates the interaction of RELA with HDAC1, HDAC2 and HDAC3 thereby inhibiting NF-kappa-B transcriptional activity. Interacts with DHX9; this interaction is direct and activates NF-kappa-B-mediated transcription. Interacts with LRRC25. Interacts with TBX21. Interacts with KAT2A. Interacts with ZBTB7A; involved in the control by RELA of the accessibility of target gene promoters. Directly interacts with DDX3X; this interaction may trap RELA in the cytoplasm, impairing nuclear relocalization upon TNF activating signals. Interacts with PHF2. Interacts with MKRN2; the interaction leads to its polyubiquitination and proteasome-dependent degradation. Interacts with ECSIT. Interacts with RAB28; the interaction contributes to RELA transport from cytoplasm to nucleus. In terms of processing, ubiquitinated by RNF182, leading to its proteasomal degradation. Degradation is required for termination of NF-kappa-B response. Polyubiquitinated via 'Lys-29'-linked ubiquitin; leading to lysosomal degradation. Post-translationally, monomethylated at Lys-310 by SETD6. Monomethylation at Lys-310 is recognized by the ANK repeats of EHMT1 and promotes the formation of repressed chromatin at target genes, leading to down-regulation of NF-kappa-B transcription factor activity. Phosphorylation at Ser-311 disrupts the interaction with EHMT1 without preventing monomethylation at Lys-310 and relieves the repression of target genes. Phosphorylation at Ser-311 disrupts the interaction with EHMT1 and promotes transcription factor activity. Phosphorylation on Ser-535 stimulates acetylation on Lys-310 and interaction with CBP; the phosphorylated and acetylated forms show enhanced transcriptional activity. Phosphorylation at Ser-276 by RPS6KA4 and RPS6KA5 promotes its transactivation and transcriptional activities. In terms of processing, phosphorylation at Ser-75 by herpes simplex virus 1/HHV-1 inhibits NF-kappa-B activation. Post-translationally, reversibly acetylated; the acetylation seems to be mediated by CBP, the deacetylation by HDAC3 and SIRT2. Acetylation at Lys-122 enhances DNA binding and impairs association with NFKBIA. Acetylation at Lys-310 is required for full transcriptional activity in the absence of effects on DNA binding and NFKBIA association. Acetylation at Lys-310 promotes interaction with BRD4. Acetylation can also lower DNA-binding and results in nuclear export. Interaction with BRMS1 promotes deacetylation of Lys-310. Lys-310 is deacetylated by SIRT2. S-nitrosylation of Cys-38 inactivates the enzyme activity. In terms of processing, sulfhydration at Cys-38 mediates the anti-apoptotic activity by promoting the interaction with RPS3 and activating the transcription factor activity. Post-translationally, sumoylation by PIAS3 negatively regulates DNA-bound activated NF-kappa-B. Proteolytically cleaved within a conserved N-terminus region required for base-specific contact with DNA in a CPEN1-mediated manner, and hence inhibits NF-kappa-B transcriptional activity.

The protein resides in the nucleus. It localises to the cytoplasm. NF-kappa-B is a pleiotropic transcription factor present in almost all cell types and is the endpoint of a series of signal transduction events that are initiated by a vast array of stimuli related to many biological processes such as inflammation, immunity, differentiation, cell growth, tumorigenesis and apoptosis. NF-kappa-B is a homo- or heterodimeric complex formed by the Rel-like domain-containing proteins RELA/p65, RELB, NFKB1/p105, NFKB1/p50, REL and NFKB2/p52. The heterodimeric RELA-NFKB1 complex appears to be most abundant one. The dimers bind at kappa-B sites in the DNA of their target genes and the individual dimers have distinct preferences for different kappa-B sites that they can bind with distinguishable affinity and specificity. Different dimer combinations act as transcriptional activators or repressors, respectively. The NF-kappa-B heterodimeric RELA-NFKB1 and RELA-REL complexes, for instance, function as transcriptional activators. NF-kappa-B is controlled by various mechanisms of post-translational modification and subcellular compartmentalization as well as by interactions with other cofactors or corepressors. NF-kappa-B complexes are held in the cytoplasm in an inactive state complexed with members of the NF-kappa-B inhibitor (I-kappa-B) family. In a conventional activation pathway, I-kappa-B is phosphorylated by I-kappa-B kinases (IKKs) in response to different activators, subsequently degraded thus liberating the active NF-kappa-B complex which translocates to the nucleus. The inhibitory effect of I-kappa-B on NF-kappa-B through retention in the cytoplasm is exerted primarily through the interaction with RELA. RELA shows a weak DNA-binding site which could contribute directly to DNA binding in the NF-kappa-B complex. Besides its activity as a direct transcriptional activator, it is also able to modulate promoters accessibility to transcription factors and thereby indirectly regulate gene expression. Associates with chromatin at the NF-kappa-B promoter region via association with DDX1. Essential for cytokine gene expression in T-cells. The NF-kappa-B homodimeric RELA-RELA complex appears to be involved in invasin-mediated activation of IL-8 expression. Key transcription factor regulating the IFN response during SARS-CoV-2 infection. This Rattus norvegicus (Rat) protein is Transcription factor p65.